The chain runs to 493 residues: Cyclin-dependent kinase-like 2 (493 aa).

The Protein kinase domain occupies 4-287 (YENLGLVGEG…CAELLHHDFF (284 aa)). Residues 10–18 (VGEGSYGMV) and Lys33 contribute to the ATP site. The [NKR]KIAxRE motif lies at 45–51 (KKIAMRE). Asp126 (proton acceptor) is an active-site residue. The disordered stretch occupies residues 363–384 (GEKAEKGNRASNASCLHDSRTS).

Belongs to the protein kinase superfamily. CMGC Ser/Thr protein kinase family. CDC2/CDKX subfamily. In terms of tissue distribution, expressed in testis and kidney, and at lower level in brain and lung.

It localises to the cytoplasm. Its subcellular location is the nucleus. It catalyses the reaction L-seryl-[protein] + ATP = O-phospho-L-seryl-[protein] + ADP + H(+). The enzyme catalyses L-threonyl-[protein] + ATP = O-phospho-L-threonyl-[protein] + ADP + H(+). In Homo sapiens (Human), this protein is Cyclin-dependent kinase-like 2.